Here is a 163-residue protein sequence, read N- to C-terminus: Cyclic pyranopterin monophosphate synthase (163 aa).

Substrate is bound by residues 75 to 77 and 113 to 114; these read LCH and ME. Residue aspartate 128 is part of the active site.

This sequence belongs to the MoaC family. In terms of assembly, homohexamer; trimer of dimers.

The enzyme catalyses (8S)-3',8-cyclo-7,8-dihydroguanosine 5'-triphosphate = cyclic pyranopterin phosphate + diphosphate. It functions in the pathway cofactor biosynthesis; molybdopterin biosynthesis. Catalyzes the conversion of (8S)-3',8-cyclo-7,8-dihydroguanosine 5'-triphosphate to cyclic pyranopterin monophosphate (cPMP). The sequence is that of Cyclic pyranopterin monophosphate synthase from Jannaschia sp. (strain CCS1).